Here is an 892-residue protein sequence, read N- to C-terminus: Alpha-actinin-1 (892 aa).

Methionine 1 bears the N-acetylmethionine mark. Residues 1–247 (MDHYDSQQTN…IMTYVSSFYH (247 aa)) are actin-binding. Serine 6 carries the post-translational modification Phosphoserine. The residue at position 12 (tyrosine 12) is a Phosphotyrosine; by FAK1. Calponin-homology (CH) domains follow at residues 31-135 (KQQR…LRFA) and 144-250 (TSAK…HAFS). Lysine 95 and lysine 195 each carry N6-acetyllysine. Spectrin repeat units follow at residues 274 to 384 (QLME…WLLN), 394 to 499 (HLAE…ALER), 509 to 620 (QLYL…ALTE), and 630 to 733 (RLRK…EVEN). The segment at 274-733 (QLMEDYEKLA…IARTINEVEN (460 aa)) is interaction with DDN. Serine 471 is subject to Phosphoserine. Residue lysine 676 is modified to N6-acetyllysine. Serine 677 bears the Phosphoserine mark. EF-hand domains lie at 746–781 (EQMN…LGYD) and 787–822 (QGEA…ETAD). Residues aspartate 759, aspartate 761, serine 763, threonine 765, and glutamate 770 each contribute to the Ca(2+) site. A Phosphoserine modification is found at serine 890.

Belongs to the alpha-actinin family. Homodimer; antiparallel. Interacts with MYOZ2, TTID and LPP. Interacts with DDN. Interacts with PSD. Interacts with MICALL2. Interacts with DNM2 and CTTN. Interacts with PDLIM1. Interacts with PDLIM2. Interacts with PDLIM4 (via PDZ domain). Interacts with IGSF8.

The protein localises to the cytoplasm. The protein resides in the cytoskeleton. It localises to the myofibril. It is found in the sarcomere. Its subcellular location is the z line. The protein localises to the cell membrane. The protein resides in the cell junction. It localises to the cell projection. It is found in the ruffle. Functionally, F-actin cross-linking protein which is thought to anchor actin to a variety of intracellular structures. Association with IGSF8 regulates the immune synapse formation and is required for efficient T-cell activation. This Macaca fascicularis (Crab-eating macaque) protein is Alpha-actinin-1 (ACTN1).